We begin with the raw amino-acid sequence, 161 residues long: Deoxyuridine 5'-triphosphate nucleotidohydrolase (161 aa).

Substrate is bound by residues 80-82, N93, 97-99, and K107; these read RSG and TVD.

This sequence belongs to the dUTPase family. It depends on Mg(2+) as a cofactor.

It carries out the reaction dUTP + H2O = dUMP + diphosphate + H(+). Its pathway is pyrimidine metabolism; dUMP biosynthesis; dUMP from dCTP (dUTP route): step 2/2. Functionally, this enzyme is involved in nucleotide metabolism: it produces dUMP, the immediate precursor of thymidine nucleotides and it decreases the intracellular concentration of dUTP so that uracil cannot be incorporated into DNA. This is Deoxyuridine 5'-triphosphate nucleotidohydrolase from Mesorhizobium japonicum (strain LMG 29417 / CECT 9101 / MAFF 303099) (Mesorhizobium loti (strain MAFF 303099)).